We begin with the raw amino-acid sequence, 299 residues long: Taste receptor type 2 member 1 (299 aa).

The Extracellular segment spans residues 1 to 9; it reads MLESHLIIY. Residues 10-30 form a helical membrane-spanning segment; that stretch reads FLLAVIQFLLGIFTNGIIVVV. The Cytoplasmic segment spans residues 31–55; the sequence is NGIDLIKHRKMAPLDLLLSCLAVSR. Residues 56-76 traverse the membrane as a helical segment; the sequence is IFLQLFIFYVNVIVIFFIEFI. Topologically, residues 77–81 are extracellular; sequence MCSAN. A helical transmembrane segment spans residues 82 to 102; the sequence is CAILLFVNELELWLATWLGVF. Residues 103-124 lie on the Cytoplasmic side of the membrane; that stretch reads YCAKVASVRHPLFIWLKMRISK. A helical transmembrane segment spans residues 125–145; the sequence is LVPWMILGSLLYVSMICVFHS. Topologically, residues 146–178 are extracellular; the sequence is KYAGFMVPHFLRNFFSQNATIQKEDTLAIQIFS. An N-linked (GlcNAc...) asparagine glycan is attached at N163. A helical transmembrane segment spans residues 179–199; sequence FVAEFSVPLLIFLVAVLLLIF. Residues 200–222 lie on the Cytoplasmic side of the membrane; the sequence is SLGRHTRQMRNTVAGSRVPGRGA. Residues 223–243 form a helical membrane-spanning segment; that stretch reads PISALLSILSFLILYFSHCMI. Over 244-257 the chain is Extracellular; that stretch reads KVFLSSLKFHVRRF. Residues 258–278 traverse the membrane as a helical segment; sequence IFLFFILVIGIYPSGHSLILI. Over 279-299 the chain is Cytoplasmic; sequence LGNPKLKQNAKKFLLHSKCCQ.

It belongs to the G-protein coupled receptor T2R family.

It localises to the membrane. In terms of biological role, receptor that may play a role in the perception of bitterness and is gustducin-linked. May play a role in sensing the chemical composition of the gastrointestinal content. The activity of this receptor may stimulate alpha gustducin, mediate PLC-beta-2 activation and lead to the gating of TRPM5. This Pan paniscus (Pygmy chimpanzee) protein is Taste receptor type 2 member 1 (TAS2R1).